Here is a 258-residue protein sequence, read N- to C-terminus: MWFLVLCLALSLGGTGAAPPIQSRIVGGWECSQPWQAALYHFSTFQCGGILVHPQWVLTAAHCIGDNYQLWLGRHNLFDDEDTAQFVHVSESFPHPCFNMSLLKNHTRQADEDYSHDLMLLRLTQPAEITDAVQVVELPTQEPEVGSTCLASGWGSIEPENFSYPDDLQCVDLKILPNDKCAKAHTQKVTEFMLCAGHLEGGKDTCVGDSGGPLTCDGVLQGVTSWGYIPCGSPNKPAVFVRVLSYVKWIEDTIAENS.

The signal sequence occupies residues 1 to 18; it reads MWFLVLCLALSLGGTGAA. Residues 19–24 constitute a propeptide, activation peptide; it reads PPIQSR. The Peptidase S1 domain maps to 25-255; the sequence is IVGGWECSQP…YVKWIEDTIA (231 aa). 5 cysteine pairs are disulfide-bonded: cysteine 31–cysteine 170, cysteine 47–cysteine 63, cysteine 149–cysteine 216, cysteine 181–cysteine 195, and cysteine 206–cysteine 231. Residue histidine 62 is the Charge relay system of the active site. An O-linked (GalNAc...) serine glycan is attached at serine 90. A glycan (N-linked (GlcNAc...) asparagine) is linked at asparagine 99. A glycan (O-linked (GalNAc...) serine) is linked at serine 101. An N-linked (GlcNAc...) asparagine glycan is attached at asparagine 105. The active-site Charge relay system is aspartate 117. Residue asparagine 161 is glycosylated (N-linked (GlcNAc...) asparagine). Serine 163 is a glycosylation site (O-linked (GalNAc...) serine). Catalysis depends on serine 210, which acts as the Charge relay system.

It belongs to the peptidase S1 family. Kallikrein subfamily.

It carries out the reaction Preferential cleavage of Arg-|-Xaa bonds in small molecule substrates. Highly selective action to release kallidin (lysyl-bradykinin) from kininogen involves hydrolysis of Met-|-Xaa or Leu-|-Xaa.. In terms of biological role, glandular kallikreins cleave Met-Lys and Arg-Ser bonds in kininogen to release Lys-bradykinin. The polypeptide is Kallikrein-1 (KLK1) (Papio hamadryas (Hamadryas baboon)).